A 161-amino-acid chain; its full sequence is Allophycocyanin beta subunit (161 aa).

The residue at position 71 (Asn-71) is an N4-methylasparagine. Cys-81 is a (2R,3E)-phycocyanobilin binding site.

Belongs to the phycobiliprotein family. Heterodimer of an alpha and a beta chain. Contains one covalently linked phycocyanobilin chromophore. The chromophore is added by the phycocyanobilin lyase CpcUS.

The protein localises to the cellular thylakoid membrane. Functionally, light-harvesting photosynthetic bile pigment-protein from the phycobiliprotein complex. Allophycocyanin has a maximum absorption at approximately 650 nanometers. This chain is Allophycocyanin beta subunit (apcB), found in Picosynechococcus sp. (strain ATCC 27264 / PCC 7002 / PR-6) (Agmenellum quadruplicatum).